A 325-amino-acid chain; its full sequence is Lipoyl synthase (325 aa).

The segment at 1-33 (MATVIDTLKARGSEDRAARHPEKQNRPDTPVLR) is disordered. A compositionally biased stretch (basic and acidic residues) spans 8 to 33 (LKARGSEDRAARHPEKQNRPDTPVLR). The [4Fe-4S] cluster site is built by Cys64, Cys69, Cys75, Cys90, Cys94, Cys97, and Ser303. A Radical SAM core domain is found at 76–292 (WSQKHATMMI…EAIARAKGFL (217 aa)).

Belongs to the radical SAM superfamily. Lipoyl synthase family. It depends on [4Fe-4S] cluster as a cofactor.

It is found in the cytoplasm. The catalysed reaction is [[Fe-S] cluster scaffold protein carrying a second [4Fe-4S](2+) cluster] + N(6)-octanoyl-L-lysyl-[protein] + 2 oxidized [2Fe-2S]-[ferredoxin] + 2 S-adenosyl-L-methionine + 4 H(+) = [[Fe-S] cluster scaffold protein] + N(6)-[(R)-dihydrolipoyl]-L-lysyl-[protein] + 4 Fe(3+) + 2 hydrogen sulfide + 2 5'-deoxyadenosine + 2 L-methionine + 2 reduced [2Fe-2S]-[ferredoxin]. It participates in protein modification; protein lipoylation via endogenous pathway; protein N(6)-(lipoyl)lysine from octanoyl-[acyl-carrier-protein]: step 2/2. In terms of biological role, catalyzes the radical-mediated insertion of two sulfur atoms into the C-6 and C-8 positions of the octanoyl moiety bound to the lipoyl domains of lipoate-dependent enzymes, thereby converting the octanoylated domains into lipoylated derivatives. This is Lipoyl synthase from Caulobacter vibrioides (strain ATCC 19089 / CIP 103742 / CB 15) (Caulobacter crescentus).